We begin with the raw amino-acid sequence, 182 residues long: Keratin, type II cytoskeletal 60 kDa, component III (182 aa).

The region spanning 1–63 (ERGELALKDA…KLLEGEECRL (63 aa)) is the IF rod domain. The segment at 1 to 63 (ERGELALKDA…KLLEGEECRL (63 aa)) is coil 2. The segment at 63 to 182 (LSGEGVGPVN…TSSSRKSFKS (120 aa)) is tail. The interval 157 to 182 (FGSGGGSSSSVKFVSTTSSSRKSFKS) is disordered. The span at 164-182 (SSSVKFVSTTSSSRKSFKS) shows a compositional bias: low complexity.

This sequence belongs to the intermediate filament family. In terms of assembly, heterotetramer of two type I and two type II keratins.

The sequence is that of Keratin, type II cytoskeletal 60 kDa, component III from Bos taurus (Bovine).